A 173-amino-acid polypeptide reads, in one-letter code: Ribosome maturation factor RimM (173 aa).

The 74-residue stretch at Glu-93 to Met-166 folds into the PRC barrel domain.

Belongs to the RimM family. Binds ribosomal protein uS19.

The protein localises to the cytoplasm. Its function is as follows. An accessory protein needed during the final step in the assembly of 30S ribosomal subunit, possibly for assembly of the head region. Essential for efficient processing of 16S rRNA. May be needed both before and after RbfA during the maturation of 16S rRNA. It has affinity for free ribosomal 30S subunits but not for 70S ribosomes. In Fusobacterium nucleatum subsp. nucleatum (strain ATCC 25586 / DSM 15643 / BCRC 10681 / CIP 101130 / JCM 8532 / KCTC 2640 / LMG 13131 / VPI 4355), this protein is Ribosome maturation factor RimM.